The following is a 922-amino-acid chain: uncharacterized protein (922 aa).

Disordered stretches follow at residues 459 to 522 (SLQD…QPKN), 539 to 627 (SNSA…SSLG), 649 to 668 (GFSS…RQPF), 692 to 835 (QKLD…VTSL), and 856 to 879 (PWRK…RPER). Residues 546–567 (KAKHSSNKPHKAASSRISKTKS) are compositionally biased toward basic residues. The span at 582-600 (KKSEESKQSGKKVKVEEKQ) shows a compositional bias: basic and acidic residues. Over residues 651–660 (SSSRTLGSSS) the composition is skewed to low complexity. Residues 692-702 (QKLDGSAEKEC) are compositionally biased toward basic and acidic residues. Composition is skewed to polar residues over residues 755–779 (DSTN…SLTG) and 790–824 (KATQ…SSLQ). Residues 872 to 899 (TEEQRPEREAMKRKAQQERENAAKYTSL) adopt a coiled-coil conformation.

This is an uncharacterized protein from Homo sapiens (Human).